The sequence spans 318 residues: Glycine--tRNA ligase alpha subunit (318 aa).

It belongs to the class-II aminoacyl-tRNA synthetase family. Tetramer of two alpha and two beta subunits.

It localises to the cytoplasm. It carries out the reaction tRNA(Gly) + glycine + ATP = glycyl-tRNA(Gly) + AMP + diphosphate. This is Glycine--tRNA ligase alpha subunit (glyQ) from Moraxella catarrhalis (Branhamella catarrhalis).